Here is a 404-residue protein sequence, read N- to C-terminus: Ubiquitin-like modifier-activating enzyme 5 (404 aa).

Gly83, Asp104, Lys127, Asn150, and Asn184 together coordinate ATP. Zn(2+) contacts are provided by Cys226 and Cys229. The Glycyl thioester intermediate role is filled by Cys250. Residues Cys303 and Cys308 each contribute to the Zn(2+) site. The interval 372-404 (APEKSSETSEETVSAATADETSLEDLMAQMKSM) is disordered. Over residues 382–391 (ETVSAATADE) the composition is skewed to low complexity.

It belongs to the ubiquitin-activating E1 family. UBA5 subfamily. As to quaternary structure, interacts (via C-terminus) with Ufc1. Interacts with Ufm1.

Its subcellular location is the cytoplasm. It is found in the nucleus. The protein localises to the golgi apparatus. Its function is as follows. E1-like enzyme which activates UFM1. In Drosophila melanogaster (Fruit fly), this protein is Ubiquitin-like modifier-activating enzyme 5.